The sequence spans 914 residues: Thyroid peroxidase (914 aa).

A signal peptide spans 1–31 (MRTLGAMAIMLVVMGTVIFLSFILRSRDILC). Residues 32–834 (GKTMKSHVIS…TCIDSGRLPR (803 aa)) lie on the Extracellular side of the membrane. N-linked (GlcNAc...) asparagine glycosylation occurs at asparagine 123. Cysteine 136 and cysteine 152 are disulfide-bonded. Residue aspartate 232 coordinates heme b. The Proton acceptor role is filled by histidine 233. A Ca(2+)-binding site is contributed by aspartate 234. Disulfide bonds link cysteine 253-cysteine 263 and cysteine 257-cysteine 278. Residues asparagine 271 and asparagine 299 are each glycosylated (N-linked (GlcNAc...) asparagine). Threonine 313, phenylalanine 315, aspartate 317, and serine 319 together coordinate Ca(2+). A glycan (N-linked (GlcNAc...) asparagine) is linked at asparagine 334. 2 residues coordinate heme b: glutamate 387 and histidine 482. Cystine bridges form between cysteine 586–cysteine 643, cysteine 684–cysteine 709, cysteine 730–cysteine 770, cysteine 756–cysteine 782, cysteine 788–cysteine 802, cysteine 796–cysteine 811, and cysteine 813–cysteine 826. N-linked (GlcNAc...) asparagine glycosylation is present at asparagine 603. The region spanning 728 to 783 (DKCVFPEEVDNGNFVHCEESGKLVLVYSCFHGYKLQGQEQVTCTQKGWDSEPPVCK) is the Sushi domain. Residues 784–827 (DVNECADLTHPPCHPSAQCKNTKGSFQCVCTDPYVLGEDEKTCI) enclose the EGF-like; calcium-binding domain. A helical membrane pass occupies residues 835–859 (ASWVSIALGALLIGGLASLTWIVIC). At 860–914 (RWTHADKKATLPITERVTTQSGCRKSQGRGISPHKAAAQDTGQEPASGSRVLLCE) the chain is on the cytoplasmic side. The disordered stretch occupies residues 881–909 (GCRKSQGRGISPHKAAAQDTGQEPASGSR).

It belongs to the peroxidase family. XPO subfamily. Interacts with DUOX1, DUOX2 and CYBA. It depends on Ca(2+) as a cofactor. Heme b serves as cofactor. Heme is covalently bound through a H(2)O(2)-dependent autocatalytic process. Heme insertion is important for the delivery of protein at the cell surface. In terms of processing, cleaved in its N-terminal part.

The protein localises to the membrane. The enzyme catalyses 2 iodide + H2O2 + 2 H(+) = diiodine + 2 H2O. The catalysed reaction is [thyroglobulin]-L-tyrosine + iodide + H2O2 + H(+) = [thyroglobulin]-3-iodo-L-tyrosine + 2 H2O. It carries out the reaction [thyroglobulin]-3-iodo-L-tyrosine + iodide + H2O2 + H(+) = [thyroglobulin]-3,5-diiodo-L-tyrosine + 2 H2O. It catalyses the reaction 2 [thyroglobulin]-3,5-diiodo-L-tyrosine + H2O2 = [thyroglobulin]-L-thyroxine + [thyroglobulin]-dehydroalanine + 2 H2O. The enzyme catalyses [thyroglobulin]-3-iodo-L-tyrosine + [thyroglobulin]-3,5-diiodo-L-tyrosine + H2O2 = [thyroglobulin]-3,3',5-triiodo-L-thyronine + [thyroglobulin]-dehydroalanine + 2 H2O. It participates in hormone biosynthesis; thyroid hormone biosynthesis. In terms of biological role, iodination and coupling of the hormonogenic tyrosines in thyroglobulin to yield the thyroid hormones T(3) and T(4). This is Thyroid peroxidase (Tpo) from Mus musculus (Mouse).